The primary structure comprises 269 residues: Protein MrkE (269 aa).

Positions 59–173 (KVIIVEDEFL…RIINMLQKLT (115 aa)) constitute a Response regulatory domain. 4-aspartylphosphate is present on D110. The HTH LytTR-type domain maps to 197 to 269 (INLIKDERII…VAQVSIANRF (73 aa)).

Its function is as follows. May be involved in the regulation of fimbrial expression. The polypeptide is Protein MrkE (mrkE) (Klebsiella pneumoniae).